Here is a 173-residue protein sequence, read N- to C-terminus: Alpha-crystallin A chain (173 aa).

Residue methionine 1 is modified to N-acetylmethionine. Residues 1–63 are required for complex formation with BFSP1 and BFSP2; that stretch reads MDVTIQHPWF…RTVLDSGISE (63 aa). Deamidated glutamine; partial is present on glutamine 6. Serine 45 carries the phosphoserine modification. At glutamine 50 the chain carries Deamidated glutamine; partial. The sHSP domain occupies 52 to 162; it reads LFRTVLDSGI…GHSERAIPVS (111 aa). At lysine 70 the chain carries N6-acetyllysine. At glutamine 90 the chain carries Deamidated glutamine; partial. At lysine 99 the chain carries N6-acetyllysine. Position 100 (histidine 100) interacts with Zn(2+). Asparagine 101 is subject to Deamidated asparagine; partial. Positions 102 and 107 each coordinate Zn(2+). Position 122 is a phosphoserine (serine 122). Deamidated asparagine; partial is present on asparagine 123. Residues 145 to 173 are disordered; it reads KVQSGLDAGHSERAIPVSREEKPSSAPSS. Position 147 is a deamidated glutamine; partial (glutamine 147). Positions 153 to 167 are enriched in basic and acidic residues; it reads GHSERAIPVSREEKP. Histidine 154 lines the Zn(2+) pocket. Serine 162 carries O-linked (GlcNAc) serine glycosylation.

Belongs to the small heat shock protein (HSP20) family. Heteromer composed of three CRYAA and one CRYAB subunits. Inter-subunit bridging via zinc ions enhances stability, which is crucial as there is no protein turn over in the lens. Can also form homodimers and homotetramers (dimers of dimers) which serve as the building blocks of homooligomers. Within homooligomers, the zinc-binding motif is created from residues of 3 different molecules. His-100 and Glu-102 from one molecule are ligands of the zinc ion, and His-107 and His-154 residues from additional molecules complete the site with tetrahedral coordination geometry. Part of a complex required for lens intermediate filament formation composed of BFSP1, BFSP2 and CRYAA. Acetylation at Lys-70 may increase chaperone activity. In terms of processing, undergoes age-dependent proteolytical cleavage at the C-terminus.

The protein localises to the cytoplasm. Its subcellular location is the nucleus. Contributes to the transparency and refractive index of the lens. Acts as a chaperone, preventing aggregation of various proteins under a wide range of stress conditions. Required for the correct formation of lens intermediate filaments as part of a complex composed of BFSP1, BFSP2 and CRYAA. The protein is Alpha-crystallin A chain (CRYAA) of Oryctolagus cuniculus (Rabbit).